A 340-amino-acid polypeptide reads, in one-letter code: Ketol-acid reductoisomerase (NADP(+)) (340 aa).

The 182-residue stretch at 1–182 (MRVYYDRDCD…GGGRSGIIET (182 aa)) folds into the KARI N-terminal Rossmann domain. Residues 24-27 (YGSQ), R48, S51, S53, and 83-86 (DELQ) each bind NADP(+). The active site involves H108. G134 is an NADP(+) binding site. One can recognise a KARI C-terminal knotted domain in the interval 183–329 (NFRQECETDL…EKLRGMMPWI (147 aa)). Residues D191, E195, E227, and E231 each contribute to the Mg(2+) site. S252 contributes to the substrate binding site.

This sequence belongs to the ketol-acid reductoisomerase family. It depends on Mg(2+) as a cofactor.

The catalysed reaction is (2R)-2,3-dihydroxy-3-methylbutanoate + NADP(+) = (2S)-2-acetolactate + NADPH + H(+). It catalyses the reaction (2R,3R)-2,3-dihydroxy-3-methylpentanoate + NADP(+) = (S)-2-ethyl-2-hydroxy-3-oxobutanoate + NADPH + H(+). The protein operates within amino-acid biosynthesis; L-isoleucine biosynthesis; L-isoleucine from 2-oxobutanoate: step 2/4. It participates in amino-acid biosynthesis; L-valine biosynthesis; L-valine from pyruvate: step 2/4. Its function is as follows. Involved in the biosynthesis of branched-chain amino acids (BCAA). Catalyzes an alkyl-migration followed by a ketol-acid reduction of (S)-2-acetolactate (S2AL) to yield (R)-2,3-dihydroxy-isovalerate. In the isomerase reaction, S2AL is rearranged via a Mg-dependent methyl migration to produce 3-hydroxy-3-methyl-2-ketobutyrate (HMKB). In the reductase reaction, this 2-ketoacid undergoes a metal-dependent reduction by NADPH to yield (R)-2,3-dihydroxy-isovalerate. This is Ketol-acid reductoisomerase (NADP(+)) from Paracoccus denitrificans (strain Pd 1222).